A 217-amino-acid polypeptide reads, in one-letter code: Imidazole glycerol phosphate synthase subunit HisH (217 aa).

In terms of domain architecture, Glutamine amidotransferase type-1 spans 5–217 (RVGIINYGVG…LRLLANFLTL (213 aa)). Residue C93 is the Nucleophile of the active site. Residues H199 and E201 contribute to the active site.

In terms of assembly, heterodimer of HisH and HisF.

The protein localises to the cytoplasm. The catalysed reaction is 5-[(5-phospho-1-deoxy-D-ribulos-1-ylimino)methylamino]-1-(5-phospho-beta-D-ribosyl)imidazole-4-carboxamide + L-glutamine = D-erythro-1-(imidazol-4-yl)glycerol 3-phosphate + 5-amino-1-(5-phospho-beta-D-ribosyl)imidazole-4-carboxamide + L-glutamate + H(+). It carries out the reaction L-glutamine + H2O = L-glutamate + NH4(+). Its pathway is amino-acid biosynthesis; L-histidine biosynthesis; L-histidine from 5-phospho-alpha-D-ribose 1-diphosphate: step 5/9. IGPS catalyzes the conversion of PRFAR and glutamine to IGP, AICAR and glutamate. The HisH subunit catalyzes the hydrolysis of glutamine to glutamate and ammonia as part of the synthesis of IGP and AICAR. The resulting ammonia molecule is channeled to the active site of HisF. The sequence is that of Imidazole glycerol phosphate synthase subunit HisH from Helicobacter hepaticus (strain ATCC 51449 / 3B1).